The chain runs to 126 residues: Ribosome-binding factor A (126 aa).

The protein belongs to the RbfA family. As to quaternary structure, monomer. Binds 30S ribosomal subunits, but not 50S ribosomal subunits or 70S ribosomes.

It is found in the cytoplasm. In terms of biological role, one of several proteins that assist in the late maturation steps of the functional core of the 30S ribosomal subunit. Associates with free 30S ribosomal subunits (but not with 30S subunits that are part of 70S ribosomes or polysomes). Required for efficient processing of 16S rRNA. May interact with the 5'-terminal helix region of 16S rRNA. The sequence is that of Ribosome-binding factor A from Azoarcus sp. (strain BH72).